The chain runs to 367 residues: Phosphoribosylaminoimidazole-succinocarboxamide synthase (367 aa).

Belongs to the SAICAR synthetase family.

The catalysed reaction is 5-amino-1-(5-phospho-D-ribosyl)imidazole-4-carboxylate + L-aspartate + ATP = (2S)-2-[5-amino-1-(5-phospho-beta-D-ribosyl)imidazole-4-carboxamido]succinate + ADP + phosphate + 2 H(+). Its pathway is purine metabolism; IMP biosynthesis via de novo pathway; 5-amino-1-(5-phospho-D-ribosyl)imidazole-4-carboxamide from 5-amino-1-(5-phospho-D-ribosyl)imidazole-4-carboxylate: step 1/2. This chain is Phosphoribosylaminoimidazole-succinocarboxamide synthase, found in Shewanella halifaxensis (strain HAW-EB4).